A 93-amino-acid polypeptide reads, in one-letter code: UPF0358 protein LMHCC_1561 (93 aa).

The protein belongs to the UPF0358 family.

This Listeria monocytogenes serotype 4a (strain HCC23) protein is UPF0358 protein LMHCC_1561.